The chain runs to 148 residues: Protein NrdI (148 aa).

The protein belongs to the NrdI family.

Its function is as follows. Probably involved in ribonucleotide reductase function. This is Protein NrdI from Mycolicibacterium gilvum (strain PYR-GCK) (Mycobacterium gilvum (strain PYR-GCK)).